Consider the following 147-residue polypeptide: 3-dehydroquinate dehydratase (147 aa).

Residue Y23 is the Proton acceptor of the active site. N75, H81, and D88 together coordinate substrate. H101 functions as the Proton donor in the catalytic mechanism. Substrate is bound by residues 102-103 (LS) and R112.

This sequence belongs to the type-II 3-dehydroquinase family. Homododecamer.

It catalyses the reaction 3-dehydroquinate = 3-dehydroshikimate + H2O. It functions in the pathway metabolic intermediate biosynthesis; chorismate biosynthesis; chorismate from D-erythrose 4-phosphate and phosphoenolpyruvate: step 3/7. Catalyzes a trans-dehydration via an enolate intermediate. The sequence is that of 3-dehydroquinate dehydratase from Stutzerimonas stutzeri (strain A1501) (Pseudomonas stutzeri).